Reading from the N-terminus, the 185-residue chain is Elongation factor P (185 aa).

This sequence belongs to the elongation factor P family.

It is found in the cytoplasm. It functions in the pathway protein biosynthesis; polypeptide chain elongation. Its function is as follows. Involved in peptide bond synthesis. Stimulates efficient translation and peptide-bond synthesis on native or reconstituted 70S ribosomes in vitro. Probably functions indirectly by altering the affinity of the ribosome for aminoacyl-tRNA, thus increasing their reactivity as acceptors for peptidyl transferase. This Oleidesulfovibrio alaskensis (strain ATCC BAA-1058 / DSM 17464 / G20) (Desulfovibrio alaskensis) protein is Elongation factor P.